A 123-amino-acid polypeptide reads, in one-letter code: Large ribosomal subunit protein uL14c (123 aa).

Belongs to the universal ribosomal protein uL14 family. Part of the 50S ribosomal subunit.

The protein resides in the plastid. The protein localises to the chloroplast. Its function is as follows. Binds to 23S rRNA. The polypeptide is Large ribosomal subunit protein uL14c (Brachypodium distachyon (Purple false brome)).